Consider the following 558-residue polypeptide: Pentatricopeptide repeat-containing protein At1g06140, mitochondrial (558 aa).

The N-terminal 79 residues, 1–79 (MLPVNRARAL…RNRHSWNTIL (79 aa)), are a transit peptide targeting the mitochondrion. PPR repeat units lie at residues 38–68 (EVVL…IPCW), 71–103 (NRHS…MRRH), 108–142 (DSFN…GLDK), 143–173 (DDYV…IPVR), 174–208 (NSVL…GLAL), 209–243 (DALT…SFID), 245–275 (SDYL…SVDR), 276–310 (NVVM…SILP), 311–345 (NQCT…GIEM), 346–376 (DAVN…MPER), 377–411 (NVIS…NVVP), 412–447 (NSVT…GVVP), and 448–482 (EEEH…PMAS). Residues 483-558 (AWGALLSACR…HVGQSATEVG (76 aa)) form a type E motif region.

The protein belongs to the PPR family. PCMP-E subfamily.

The protein resides in the mitochondrion. This Arabidopsis thaliana (Mouse-ear cress) protein is Pentatricopeptide repeat-containing protein At1g06140, mitochondrial (PCMP-E61).